Consider the following 306-residue polypeptide: Large ribosomal subunit protein mL45 (306 aa).

This sequence belongs to the mitochondrion-specific ribosomal protein mL45 family. Component of the mitochondrial ribosome large subunit (39S) which comprises a 16S rRNA and about 50 distinct proteins.

Its subcellular location is the mitochondrion. Its function is as follows. Component of the mitochondrial large ribosomal subunit (mt-LSU). Within the mitochondrial ribosomes, required to direct the nascent polypeptide toward the tunnel exit and position the exit at a distance from the membrane surface. The polypeptide is Large ribosomal subunit protein mL45 (MRPL45) (Bos taurus (Bovine)).